We begin with the raw amino-acid sequence, 327 residues long: Glycerol-3-phosphate dehydrogenase [NAD(P)+] (327 aa).

NADPH contacts are provided by tryptophan 15, arginine 35, and lysine 109. Residues lysine 109, glycine 137, and serine 139 each coordinate sn-glycerol 3-phosphate. Alanine 141 is a binding site for NADPH. Positions 192, 245, 255, 256, and 257 each coordinate sn-glycerol 3-phosphate. The Proton acceptor role is filled by lysine 192. NADPH is bound at residue arginine 256. NADPH contacts are provided by leucine 275 and glutamate 277.

It belongs to the NAD-dependent glycerol-3-phosphate dehydrogenase family.

It is found in the cytoplasm. The catalysed reaction is sn-glycerol 3-phosphate + NAD(+) = dihydroxyacetone phosphate + NADH + H(+). It catalyses the reaction sn-glycerol 3-phosphate + NADP(+) = dihydroxyacetone phosphate + NADPH + H(+). It functions in the pathway membrane lipid metabolism; glycerophospholipid metabolism. Catalyzes the reduction of the glycolytic intermediate dihydroxyacetone phosphate (DHAP) to sn-glycerol 3-phosphate (G3P), the key precursor for phospholipid synthesis. This chain is Glycerol-3-phosphate dehydrogenase [NAD(P)+], found in Chelativorans sp. (strain BNC1).